The sequence spans 396 residues: uncharacterized protein (396 aa).

Lysine 219 carries the N6-(pyridoxal phosphate)lysine modification.

Belongs to the class-V pyridoxal-phosphate-dependent aminotransferase family. Pyridoxal 5'-phosphate is required as a cofactor.

It localises to the cytoplasm. It is found in the nucleus. This is an uncharacterized protein from Schizosaccharomyces pombe (strain 972 / ATCC 24843) (Fission yeast).